A 129-amino-acid polypeptide reads, in one-letter code: Protein Turandot C (129 aa).

The first 21 residues, 1-21, serve as a signal peptide directing secretion; that stretch reads MNASISLLCLALLLISPFCLG.

It belongs to the Turandot family.

The protein resides in the secreted. Functionally, a humoral factor that may play a role in stress tolerance. The sequence is that of Protein Turandot C from Drosophila melanogaster (Fruit fly).